The primary structure comprises 75 residues: Acyl carrier protein (75 aa).

A Carrier domain is found at 1–75 (MALFDDVKEV…GDAIKFIENV (75 aa)). Position 36 is an O-(pantetheine 4'-phosphoryl)serine (S36).

It belongs to the acyl carrier protein (ACP) family. In terms of processing, 4'-phosphopantetheine is transferred from CoA to a specific serine of apo-ACP by AcpS. This modification is essential for activity because fatty acids are bound in thioester linkage to the sulfhydryl of the prosthetic group.

It is found in the cytoplasm. The protein operates within lipid metabolism; fatty acid biosynthesis. Carrier of the growing fatty acid chain in fatty acid biosynthesis. The chain is Acyl carrier protein from Sulfurovum sp. (strain NBC37-1).